The chain runs to 348 residues: UDP-3-O-acylglucosamine N-acyltransferase (348 aa).

Residue His-237 is the Proton acceptor of the active site.

This sequence belongs to the transferase hexapeptide repeat family. LpxD subfamily. As to quaternary structure, homotrimer.

It catalyses the reaction a UDP-3-O-[(3R)-3-hydroxyacyl]-alpha-D-glucosamine + a (3R)-hydroxyacyl-[ACP] = a UDP-2-N,3-O-bis[(3R)-3-hydroxyacyl]-alpha-D-glucosamine + holo-[ACP] + H(+). It participates in bacterial outer membrane biogenesis; LPS lipid A biosynthesis. Catalyzes the N-acylation of UDP-3-O-acylglucosamine using 3-hydroxyacyl-ACP as the acyl donor. Is involved in the biosynthesis of lipid A, a phosphorylated glycolipid that anchors the lipopolysaccharide to the outer membrane of the cell. In Geotalea daltonii (strain DSM 22248 / JCM 15807 / FRC-32) (Geobacter daltonii), this protein is UDP-3-O-acylglucosamine N-acyltransferase.